The following is a 1166-amino-acid chain: Serine-aspartate repeat-containing protein E (1166 aa).

The signal sequence occupies residues 1–52 (MINRDNKKAITKKGMISNRLNKFSIRKYTVGTASILVGTTLIFGLGNQEAKA). The YSIRK-G/S signaling motif signature appears at 23–34 (FSIRKYTVGTAS). The segment at 53–606 (AENTSTENAK…GDGTVKPEEK (554 aa)) is ligand binding A region. The interval 54–230 (ENTSTENAKQ…SKEELKNNPE (177 aa)) is disordered. The span at 61-75 (AKQDDATTSDNKEVV) shows a compositional bias: basic and acidic residues. A compositionally biased stretch (low complexity) spans 77 to 90 (ETENNSTTENNSTN). A compositionally biased stretch (basic and acidic residues) spans 92-108 (IKKETNTDSQPEAKKES). A compositionally biased stretch (polar residues) spans 118 to 129 (NNVTATTETKPQ). Basic and acidic residues predominate over residues 130–145 (NIEKENVKPSTDKTAT). A compositionally biased stretch (low complexity) spans 166 to 178 (TTKPSTSEPSTSE). Residues 179–212 (IQTKPTTPQESTNIENSQPQPTPSKVDNQVTDAT) are compositionally biased toward polar residues. Residues 221 to 230 (SKEELKNNPE) are compositionally biased toward basic and acidic residues. CNA-B domains lie at 607-719 (LYKI…YKEP), 720-829 (KYNL…YKTP), and 830-940 (KYSL…EEDT). Positions 904-1141 (VTNTTEDDKD…TGSENNGSNN (238 aa)) are disordered. Acidic residues-rich tracts occupy residues 908-918 (TEDDKDADGGE) and 935-1105 (YFEE…DSDS). An LPXTG sorting signal motif is present at residues 1129–1133 (LPETG). Threonine 1132 carries the post-translational modification Pentaglycyl murein peptidoglycan amidated threonine. The propeptide at 1133 to 1166 (GSENNGSNNATLFGGLFAALGSLLLFGRRKKQNK) is removed by sortase.

It belongs to the serine-aspartate repeat-containing protein (SDr) family. In terms of assembly, interacts with host complement factor H/CFAH (via C-terminus). Interacts with host complement regulator C4BPA.

The protein localises to the secreted. Its subcellular location is the cell wall. Cell surface-associated calcium-binding protein which plays an important role in adhesion and pathogenesis. Contributes to the resistance to killing by innate immune components in blood and thus attenuates bacterial clearance by interacting with host complement factor H/CFAH and modulating its activity. Inhibits also bacterial opsonization and killing by interacting with host complement regulator C4BPA and thus inhibiting classical complement pathway activation. This is Serine-aspartate repeat-containing protein E (sdrE) from Staphylococcus aureus (strain Newman).